A 358-amino-acid polypeptide reads, in one-letter code: CRS2-associated factor 2, mitochondrial (358 aa).

The transit peptide at 1 to 28 (MLSIRRSLTLAKEPKDLFLFLCNLRARC) directs the protein to the mitochondrion. A disordered region spans residues 35–64 (DPPFSPLSKPTKPPKEKKKQKTKKQDQSSE). CRM domains lie at 141–239 (ETLT…SRPI) and 261–357 (DGLE…ELVT).

As to quaternary structure, part of large ribonucleo-protein complexes that include group IIB introns.

It is found in the mitochondrion. Functionally, may be involved in the splicing of group IIB introns in mitochondria. The polypeptide is CRS2-associated factor 2, mitochondrial (Arabidopsis thaliana (Mouse-ear cress)).